A 376-amino-acid chain; its full sequence is uncharacterized protein (376 aa).

Composition is skewed to low complexity over residues 73–99 and 228–243; these read NNSI…NNNN and SSFS…TVSS. Disordered stretches follow at residues 73-100 and 222-269; these read NNSI…NNNL and EQDP…KISD.

This is an uncharacterized protein from Saccharomyces cerevisiae (strain ATCC 204508 / S288c) (Baker's yeast).